The chain runs to 311 residues: Glycosyltransferase 6 domain-containing protein 1 (311 aa).

At 1 to 5 (MKAKG) the chain is on the cytoplasmic side. The chain crosses the membrane as a helical; Signal-anchor for type II membrane protein span at residues 6–26 (RILLLTSCLFLLLLLLAKIHL). At 27 to 311 (RNHQEEELPL…KVAHYPTDDL (285 aa)) the chain is on the lumenal side. Asn77 is a glycosylation site (N-linked (GlcNAc...) asparagine). Residues 85-90 (FAVSSF), 176-178 (SVN), and 198-201 (HAWW) each bind substrate. Glu266 acts as the Nucleophile in catalysis.

Belongs to the glycosyltransferase 6 family. The cofactor is Mn(2+).

The protein resides in the membrane. The sequence is that of Glycosyltransferase 6 domain-containing protein 1 (Glt6d1) from Rattus norvegicus (Rat).